The primary structure comprises 344 residues: TATA box-binding protein-like 2 (344 aa).

The disordered stretch occupies residues 78-143 (NKDRTVTGNK…SNQLSSETPN (66 aa)). The span at 110–120 (GSGLNLNSNSS) shows a compositional bias: low complexity. Positions 134 to 143 (SNQLSSETPN) are enriched in polar residues.

It belongs to the TBP family. As to quaternary structure, interacts with TAF3.

It localises to the cytoplasm. Its subcellular location is the nucleus. In terms of biological role, transcription factor required in complex with TAF3 for the differentiation of myoblasts into myocytes. The complex replaces TFIID at specific promoters at an early stage in the differentiation process. The protein is TATA box-binding protein-like 2 of Rattus norvegicus (Rat).